Reading from the N-terminus, the 117-residue chain is Large ribosomal subunit protein eL34 (117 aa).

At serine 12 the chain carries Phosphoserine. Residues lysine 36 and lysine 43 each carry the N6-acetyllysine modification. Residue lysine 108 forms a Glycyl lysine isopeptide (Lys-Gly) (interchain with G-Cter in SUMO2) linkage.

It belongs to the eukaryotic ribosomal protein eL34 family. Component of the large ribosomal subunit.

The protein localises to the cytoplasm. It localises to the cytosol. Its subcellular location is the endoplasmic reticulum. Component of the large ribosomal subunit. The ribosome is a large ribonucleoprotein complex responsible for the synthesis of proteins in the cell. In Mus musculus (Mouse), this protein is Large ribosomal subunit protein eL34 (Rpl34).